The sequence spans 471 residues: Serine/threonine-protein kinase sid1 (471 aa).

The Protein kinase domain maps to 9 to 260; sequence YTLLRKLGSG…AKELLQHPFI (252 aa). ATP is bound by residues 15 to 23 and K38; that span reads LGSGSFGVV. The active-site Proton acceptor is D129.

The protein belongs to the protein kinase superfamily. STE Ser/Thr protein kinase family. STE20 subfamily. Interacts with cdc14.

It is found in the cytoplasm. It localises to the cytoskeleton. The protein localises to the microtubule organizing center. The protein resides in the spindle pole body. The catalysed reaction is L-seryl-[protein] + ATP = O-phospho-L-seryl-[protein] + ADP + H(+). The enzyme catalyses L-threonyl-[protein] + ATP = O-phospho-L-threonyl-[protein] + ADP + H(+). Its function is as follows. Has a role in the septation initiation network (SIN) required for cytokinesis. The chain is Serine/threonine-protein kinase sid1 (sid1) from Schizosaccharomyces pombe (strain 972 / ATCC 24843) (Fission yeast).